Here is a 319-residue protein sequence, read N- to C-terminus: Alpha-hemolysin (319 aa).

The signal sequence occupies residues 1–26 (MKTRIVSSVTTTLLLGSILMNPVAGA).

The protein belongs to the aerolysin family. Self-assembles to first form a non-lytic oligomeric intermediate, and then, a mushroom-shaped homoheptamer structure of 100 Angstroms in length and up to 100 Angstroms in diameter. Interacts with human ADAM10; this interaction is required for toxin pore formation, disruption of focal adhesions, and hly-mediated cytotoxicity.

The protein resides in the secreted. Functionally, alpha-toxin binds to the membrane of eukaryotic cells (particularly red blood cells, RBC) forming pores, resulting in hemolysis, with the release of low-molecular weight molecules leading to eventual osmotic RBC lysis. Human RBCs bind much less alpha-toxin than do rabbit RBCs. Heptamer oligomerization and pore formation is required for lytic activity. The polypeptide is Alpha-hemolysin (hly) (Staphylococcus aureus).